The primary structure comprises 109 residues: Red pigment-concentrating prohormone (109 aa).

Positions 1–25 (MVRRSGVTLLVVALLVVTLMSSVSA) are cleaved as a signal peptide. Gln-26 is modified (pyrrolidone carboxylic acid). Trp-33 carries the post-translational modification Tryptophan amide. A disordered region spans residues 34–78 (GKRAAGASGSNGGVGEAVSGLHPSVGGAPGGVVPPGSSSPGDSCG). Low complexity-rich tracts occupy residues 49–59 (EAVSGLHPSVG) and 67–78 (PPGSSSPGDSCG).

The protein belongs to the AKH/HRTH/RPCH family.

The protein resides in the secreted. Its function is as follows. This hormone adapts the animal to light backgrounds by stimulating concentration of the pigment of its red body-chromatophores. The chain is Red pigment-concentrating prohormone from Callinectes sapidus (Blue crab).